Reading from the N-terminus, the 1528-residue chain is Zinc finger FYVE domain-containing protein 16 (1528 aa).

Position 120 is a phosphoserine (Ser-120). A disordered region spans residues 629-664; it reads TQAVGGARPKQLLSLPPGTRSSKELNKPDVVDVPES. Basic and acidic residues predominate over residues 649–658; that stretch reads SSKELNKPDV. Residues 735–793 form an FYVE-type zinc finger; it reads DSEAPNCMNCQVKFTFTKRRHHCRACGKVFCGVCCNRKCKLQYLEKEARVCVICYETIN. Zn(2+) contacts are provided by Cys-741, Cys-744, Cys-757, Cys-760, Cys-765, Cys-768, Cys-785, and Cys-788. Residues Ser-803, Ser-833, Ser-884, and Ser-927 each carry the phosphoserine modification. A disordered region spans residues 819 to 849; the sequence is TDQPLQETQTSSTPSPTTLPISALKQPNVEG. Positions 821-838 are enriched in low complexity; the sequence is QPLQETQTSSTPSPTTLP. Residues 928–949 are disordered; the sequence is PTCHTAPVERLPGNTGTEGLPM.

In terms of assembly, interacts (via C-terminus) with TOM1 (via C-terminus); interaction is required to target TOM1 to endosomes. Does not interact with TOM1L1 or TOM1L2.

It localises to the cytoplasm. It is found in the early endosome membrane. Functionally, may be involved in regulating membrane trafficking in the endosomal pathway. Overexpression induces endosome aggregation. Required to target TOM1 to endosomes. This Mus musculus (Mouse) protein is Zinc finger FYVE domain-containing protein 16 (Zfyve16).